The following is a 228-amino-acid chain: Deoxyribose-phosphate aldolase (228 aa).

Asp-96 functions as the Proton donor/acceptor in the catalytic mechanism. The Schiff-base intermediate with acetaldehyde role is filled by Lys-157. Residue Lys-185 is the Proton donor/acceptor of the active site.

The protein belongs to the DeoC/FbaB aldolase family. DeoC type 1 subfamily.

Its subcellular location is the cytoplasm. It catalyses the reaction 2-deoxy-D-ribose 5-phosphate = D-glyceraldehyde 3-phosphate + acetaldehyde. Its pathway is carbohydrate degradation; 2-deoxy-D-ribose 1-phosphate degradation; D-glyceraldehyde 3-phosphate and acetaldehyde from 2-deoxy-alpha-D-ribose 1-phosphate: step 2/2. Catalyzes a reversible aldol reaction between acetaldehyde and D-glyceraldehyde 3-phosphate to generate 2-deoxy-D-ribose 5-phosphate. The polypeptide is Deoxyribose-phosphate aldolase (Picosynechococcus sp. (strain ATCC 27264 / PCC 7002 / PR-6) (Agmenellum quadruplicatum)).